We begin with the raw amino-acid sequence, 475 residues long: MLRIYNTITKSEEVFKTLNNEEVKIYVCGPTVYDETHIGHGRTYVSFDIIRRYLEHIGYSVKLVINFTDIDDKIINRALNLNVTPKKISEKYIEIFLNDMKTLNVKPADIYPKVTENIPEIISFIDKLIEKGFAYKTDSGVYFEIEKFKDYGKLSNINLENLISEDKLESKSEKKNRFDFALWKNKKSGEPYWKSPFGDGRPGWHIECSVMSMKYLGEQFDIHGGGRDLSFPHHENEIAQSSAYSGKNWVNYWVHTGFVMVNGEKMSKSLGNFVTISEISKKYSPEVLRLFFIQRHYKSPIDYTEESMEHAKASLQKLYNVIESVRIALENPVNSVWDENEAFFYNVLKNSKINFYRAMDSDFNSVNALKTVFEVSNSVTKYLSVSKSPNVALLIKTLDFFKNVGEIFGLFEGYFYKSSNVKEESLIKFLVDLRDDLRSKKNYETSDKIRDGLKELGYQIEDSSKENTVFKKINI.

Cysteine 28 is a binding site for Zn(2+). The 'HIGH' region signature appears at 30 to 40; it reads PTVYDETHIGH. Cysteine 208, histidine 233, and glutamate 237 together coordinate Zn(2+). The 'KMSKS' region signature appears at 265-269; sequence KMSKS. Residue lysine 268 coordinates ATP.

Belongs to the class-I aminoacyl-tRNA synthetase family. Requires Zn(2+) as cofactor.

It localises to the cytoplasm. The enzyme catalyses tRNA(Cys) + L-cysteine + ATP = L-cysteinyl-tRNA(Cys) + AMP + diphosphate. The protein is Cysteine--tRNA ligase of Methanococcus vannielii (strain ATCC 35089 / DSM 1224 / JCM 13029 / OCM 148 / SB).